Here is a 225-residue protein sequence, read N- to C-terminus: 3-dehydroquinate dehydratase (225 aa).

3-dehydroquinate-binding positions include 30-32 (EWR) and Arg-62. The active-site Proton donor/acceptor is the His-118. The active-site Schiff-base intermediate with substrate is Lys-143. The 3-dehydroquinate site is built by Arg-186, Ser-205, and Gln-209.

The protein belongs to the type-I 3-dehydroquinase family. In terms of assembly, homodimer.

It catalyses the reaction 3-dehydroquinate = 3-dehydroshikimate + H2O. The protein operates within metabolic intermediate biosynthesis; chorismate biosynthesis; chorismate from D-erythrose 4-phosphate and phosphoenolpyruvate: step 3/7. In terms of biological role, involved in the third step of the chorismate pathway, which leads to the biosynthesis of aromatic amino acids. Catalyzes the cis-dehydration of 3-dehydroquinate (DHQ) and introduces the first double bond of the aromatic ring to yield 3-dehydroshikimate. This chain is 3-dehydroquinate dehydratase, found in Streptococcus thermophilus (strain ATCC BAA-250 / LMG 18311).